We begin with the raw amino-acid sequence, 414 residues long: Multifunctional CCA protein (414 aa).

Residues Gly8 and Arg11 each contribute to the ATP site. CTP contacts are provided by Gly8 and Arg11. Mg(2+) contacts are provided by Asp21 and Asp23. ATP-binding residues include Arg91, Arg137, and Arg140. CTP-binding residues include Arg91, Arg137, and Arg140. The 102-residue stretch at 228–329 (TGIHTLMVLE…VKLFDKGDFW (102 aa)) folds into the HD domain.

This sequence belongs to the tRNA nucleotidyltransferase/poly(A) polymerase family. Bacterial CCA-adding enzyme type 1 subfamily. As to quaternary structure, monomer. Can also form homodimers and oligomers. The cofactor is Mg(2+). Ni(2+) is required as a cofactor.

The enzyme catalyses a tRNA precursor + 2 CTP + ATP = a tRNA with a 3' CCA end + 3 diphosphate. It carries out the reaction a tRNA with a 3' CCA end + 2 CTP + ATP = a tRNA with a 3' CCACCA end + 3 diphosphate. Functionally, catalyzes the addition and repair of the essential 3'-terminal CCA sequence in tRNAs without using a nucleic acid template. Adds these three nucleotides in the order of C, C, and A to the tRNA nucleotide-73, using CTP and ATP as substrates and producing inorganic pyrophosphate. tRNA 3'-terminal CCA addition is required both for tRNA processing and repair. Also involved in tRNA surveillance by mediating tandem CCA addition to generate a CCACCA at the 3' terminus of unstable tRNAs. While stable tRNAs receive only 3'-terminal CCA, unstable tRNAs are marked with CCACCA and rapidly degraded. This chain is Multifunctional CCA protein, found in Shewanella frigidimarina (strain NCIMB 400).